Consider the following 439-residue polypeptide: Ribulose bisphosphate carboxylase/oxygenase activase 2, chloroplastic (439 aa).

Residues 1–58 constitute a chloroplast transit peptide; the sequence is MATSVSTIGAANKAPLSLNNSVAGTSVPSTAFFGKTLKKVYGKGVSSPKVTNRSLRIA. ATP is bound at residue 169 to 176; it reads GGKGQGKS.

The protein belongs to the RuBisCO activase family.

The protein resides in the plastid. The protein localises to the chloroplast stroma. Its function is as follows. Activation of RuBisCO (ribulose-1,5-bisphosphate carboxylase/oxygenase; EC 4.1.1.39) involves the ATP-dependent carboxylation of the epsilon-amino group of lysine leading to a carbamate structure. This Nicotiana tabacum (Common tobacco) protein is Ribulose bisphosphate carboxylase/oxygenase activase 2, chloroplastic (RCA).